Consider the following 507-residue polypeptide: ATP synthase subunit alpha, chloroplastic (507 aa).

An ATP-binding site is contributed by 170 to 177 (GDRQTGKT).

This sequence belongs to the ATPase alpha/beta chains family. F-type ATPases have 2 components, CF(1) - the catalytic core - and CF(0) - the membrane proton channel. CF(1) has five subunits: alpha(3), beta(3), gamma(1), delta(1), epsilon(1). CF(0) has four main subunits: a, b, b' and c.

The protein localises to the plastid. Its subcellular location is the chloroplast thylakoid membrane. The catalysed reaction is ATP + H2O + 4 H(+)(in) = ADP + phosphate + 5 H(+)(out). Functionally, produces ATP from ADP in the presence of a proton gradient across the membrane. The alpha chain is a regulatory subunit. The sequence is that of ATP synthase subunit alpha, chloroplastic from Silene latifolia (White campion).